Here is a 337-residue protein sequence, read N- to C-terminus: S-adenosylmethionine:tRNA ribosyltransferase-isomerase (337 aa).

It belongs to the QueA family. Monomer.

It is found in the cytoplasm. The enzyme catalyses 7-aminomethyl-7-carbaguanosine(34) in tRNA + S-adenosyl-L-methionine = epoxyqueuosine(34) in tRNA + adenine + L-methionine + 2 H(+). The protein operates within tRNA modification; tRNA-queuosine biosynthesis. Its function is as follows. Transfers and isomerizes the ribose moiety from AdoMet to the 7-aminomethyl group of 7-deazaguanine (preQ1-tRNA) to give epoxyqueuosine (oQ-tRNA). This chain is S-adenosylmethionine:tRNA ribosyltransferase-isomerase, found in Legionella pneumophila (strain Lens).